We begin with the raw amino-acid sequence, 126 residues long: Large ribosomal subunit protein uL22 (126 aa).

It belongs to the universal ribosomal protein uL22 family. As to quaternary structure, part of the 50S ribosomal subunit.

Its function is as follows. This protein binds specifically to 23S rRNA; its binding is stimulated by other ribosomal proteins, e.g. L4, L17, and L20. It is important during the early stages of 50S assembly. It makes multiple contacts with different domains of the 23S rRNA in the assembled 50S subunit and ribosome. The globular domain of the protein is located near the polypeptide exit tunnel on the outside of the subunit, while an extended beta-hairpin is found that lines the wall of the exit tunnel in the center of the 70S ribosome. This chain is Large ribosomal subunit protein uL22, found in Caulobacter vibrioides (strain ATCC 19089 / CIP 103742 / CB 15) (Caulobacter crescentus).